Here is a 569-residue protein sequence, read N- to C-terminus: Dihydroxy-acid dehydratase (569 aa).

Cys61 contributes to the [2Fe-2S] cluster binding site. Asp93 is a Mg(2+) binding site. Residue Cys134 participates in [2Fe-2S] cluster binding. Residues Asp135 and Lys136 each contribute to the Mg(2+) site. Lys136 is modified (N6-carboxylysine). Cys211 provides a ligand contact to [2Fe-2S] cluster. Mg(2+) is bound at residue Glu462. The Proton acceptor role is filled by Ser488.

This sequence belongs to the IlvD/Edd family. Homodimer. It depends on [2Fe-2S] cluster as a cofactor. Mg(2+) is required as a cofactor.

It carries out the reaction (2R)-2,3-dihydroxy-3-methylbutanoate = 3-methyl-2-oxobutanoate + H2O. The catalysed reaction is (2R,3R)-2,3-dihydroxy-3-methylpentanoate = (S)-3-methyl-2-oxopentanoate + H2O. Its pathway is amino-acid biosynthesis; L-isoleucine biosynthesis; L-isoleucine from 2-oxobutanoate: step 3/4. The protein operates within amino-acid biosynthesis; L-valine biosynthesis; L-valine from pyruvate: step 3/4. Its function is as follows. Functions in the biosynthesis of branched-chain amino acids. Catalyzes the dehydration of (2R,3R)-2,3-dihydroxy-3-methylpentanoate (2,3-dihydroxy-3-methylvalerate) into 2-oxo-3-methylpentanoate (2-oxo-3-methylvalerate) and of (2R)-2,3-dihydroxy-3-methylbutanoate (2,3-dihydroxyisovalerate) into 2-oxo-3-methylbutanoate (2-oxoisovalerate), the penultimate precursor to L-isoleucine and L-valine, respectively. This chain is Dihydroxy-acid dehydratase, found in Tropheryma whipplei (strain Twist) (Whipple's bacillus).